The chain runs to 1122 residues: MDSLAGLVLCGVSLLLYGVVEGAMDLILINSLPLVSDAETSLTCIASGWHPHEPITIGRDFEALMNQHQDPLEVTQDVTREWAKKVVWKREKASKINGAYFCEGRVRGQAIRIRTMKMRQQASFLPATLTMTVDRGDNVNISFKKVLIKEEDAVIYKNGSFIHSVPRHEVPDILEVHLPHAQPQDAGVYSARYIGGNLFTSAFTRLIVRRCEAQKWGPDCSRPCTTCKNNGVCHEDTGECICPPGFMGRTCEKACEPHTFGRTCKERCSGPEGCKSYVFCLPDPYGCSCATGWRGLQCNEACPSGYYGPDCKLRCHCTNEEICDRFQGCLCSQGWQGLQCEKEGRPRMTPQIEDLPDHIEVNSGKFNPICKASGWPLPTSEEMTLVKPDGTVLQPNDFNYTDRFSVAIFTVNRVLPPDSGVWVCSVNTVAGMVEKPFNISVKVLPEPLHAPNVIDTGHNFAIINISSEPYFGDGPIKSKKLFYKPVNQAWKYIEVTNEIFTLNYLEPRTDYELCVQLARPGEGGEGHPGPVRRFTTASIGLPPPRGLSLLPKSQTALNLTWQPIFTNSEDEFYVEVERRSLQTTSDQQNIKVPGNLTSVLLSNLVPREQYTVRARVNTKAQGEWSEELRAWTLSDILPPQPENIKISNITDSTAMVSWTIVDGYSISSIIIRYKVQGKNEDQHIDVKIKNATVTQYQLKGLEPETTYHVDIFAENNIGSSNPAFSHELRTLPHSPASADLGGGKMLLIAILGSAGMTCITVLLAFLIMLQLKRANVQRRMAQAFQNREEPAVQFNSGTLALNRKAKNNPDPTIYPVLDWNDIKFQDVIGEGNFGQVLKARIKKDGLRMDAAIKRMKEYASKDDHRDFAGELEVLCKLGHHPNIINLLGACEHRGYLYLAIEYAPHGNLLDFLRKSRVLETDPAFAIANSTASTLSSQQLLHFAADVARGMDYLSQKQFIHRDLAARNILVGENYIAKIADFGLSRGQEVYVKKTMGRLPVRWMAIESLNYSVYTTNSDVWSYGVLLWEIVSLGGTPYCGMTCAELYEKLPQGYRLEKPLNCDDEVYDLMRQCWREKPYERPSFAQILVSLNRMLEERKTYVNTTLYEKFTYAGIDCSAEEAA.

The N-terminal stretch at 1–22 is a signal peptide; it reads MDSLAGLVLCGVSLLLYGVVEG. The Extracellular segment spans residues 23–746; the sequence is AMDLILINSL…SADLGGGKML (724 aa). A disulfide bridge links Cys44 with Cys102. The Ig-like C2-type 1 domain maps to 44–123; sequence CIASGWHPHE…RTMKMRQQAS (80 aa). 2 N-linked (GlcNAc...) asparagine glycosylation sites follow: Asn140 and Asn158. EGF-like domains follow at residues 210-252, 254-299, and 301-341; these read RCEA…RTCE, ACEP…LQCN, and ACPS…LQCE. Disulfide bonds link Cys211–Cys220, Cys224–Cys233, Cys227–Cys240, Cys242–Cys251, Cys255–Cys264, Cys268–Cys274, Cys280–Cys287, Cys289–Cys298, Cys302–Cys311, Cys315–Cys323, Cys317–Cys329, Cys331–Cys340, and Cys370–Cys424. One can recognise an Ig-like C2-type 2 domain in the interval 350-440; that stretch reads PQIEDLPDHI…GMVEKPFNIS (91 aa). N-linked (GlcNAc...) asparagine glycans are attached at residues Asn399, Asn438, Asn464, Asn558, Asn595, Asn648, and Asn690. Fibronectin type-III domains are found at residues 444–539, 543–635, and 640–733; these read LPEP…TASI, PPRG…TLSD, and QPEN…TLPH. A helical membrane pass occupies residues 747–767; the sequence is LIAILGSAGMTCITVLLAFLI. At 768 to 1122 the chain is on the cytoplasmic side; that stretch reads MLQLKRANVQ…GIDCSAEEAA (355 aa). In terms of domain architecture, Protein kinase spans 822–1094; that stretch reads IKFQDVIGEG…QILVSLNRML (273 aa). ATP-binding positions include 828–836 and Lys853; that span reads IGEGNFGQV. At Tyr858 the chain carries Phosphotyrosine; by autocatalysis. Asp962 serves as the catalytic Proton acceptor. A phosphotyrosine; by autocatalysis mark is found at Tyr990, Tyr1100, and Tyr1106.

It belongs to the protein kinase superfamily. Tyr protein kinase family. Tie subfamily. Homodimer. Heterodimer with TIE1. Interacts with ANGPT1, ANGPT2 and ANGPT4. At cell-cell contacts in quiescent cells, forms a signaling complex composed of ANGPT1 plus TEK molecules from two adjoining cells. In the absence of endothelial cell-cell contacts, interaction with ANGPT1 mediates contacts with the extracellular matrix. Interacts (tyrosine phosphorylated) with TNIP2. Interacts (tyrosine phosphorylated) with SHC1 (via SH2 domain). Interacts with PTPRB; this promotes endothelial cell-cell adhesion. Interacts with DOK2, GRB2, GRB7, GRB14, PIK3R1 and PTPN11/SHP2. Colocalizes with DOK2 at contacts with the extracellular matrix in migrating cells. Proteolytic processing leads to the shedding of the extracellular domain (soluble TIE-2 alias sTIE-2). Post-translationally, autophosphorylated on tyrosine residues in response to ligand binding. Autophosphorylation occurs in trans, i.e. one subunit of the dimeric receptor phosphorylates tyrosine residues on the other subunit. Autophosphorylation occurs in a sequential manner, where Tyr-990 in the kinase activation loop is phosphorylated first, followed by autophosphorylation at Tyr-1106 and at additional tyrosine residues. ANGPT1-induced phosphorylation is impaired during hypoxia, due to increased expression of ANGPT2. Phosphorylation is important for interaction with GRB14, PIK3R1 and PTPN11. Phosphorylation at Tyr-1100 is important for interaction with GRB2 and GRB7. Phosphorylation at Tyr-1106 is important for interaction with DOK2 and for coupling to downstream signal transduction pathways in endothelial cells. Dephosphorylated by PTPRB. In terms of processing, ubiquitinated. The phosphorylated receptor is ubiquitinated and internalized, leading to its degradation. As to expression, specifically expressed in developing vascular endothelial cells. Abundantly expressed in lung and heart, moderately in brain, liver and kidney, and weakly in thymus, spleen and testis.

It is found in the cell membrane. The protein localises to the cell junction. It localises to the focal adhesion. The protein resides in the cytoplasm. Its subcellular location is the cytoskeleton. It is found in the secreted. It carries out the reaction L-tyrosyl-[protein] + ATP = O-phospho-L-tyrosyl-[protein] + ADP + H(+). Its activity is regulated as follows. Angiopoietin binding leads to receptor dimerization and activation by autophosphorylation at Tyr-990 on the kinase activation loop. Tyrosine-protein kinase that acts as a cell-surface receptor for ANGPT1, ANGPT2 and ANGPT4 and regulates angiogenesis, endothelial cell survival, proliferation, migration, adhesion and cell spreading, reorganization of the actin cytoskeleton, but also maintenance of vascular quiescence. Has anti-inflammatory effects by preventing the leakage of pro-inflammatory plasma proteins and leukocytes from blood vessels. Required for normal angiogenesis and heart development during embryogenesis. Required for postnatal hematopoiesis. After birth, activates or inhibits angiogenesis, depending on the context. Inhibits angiogenesis and promotes vascular stability in quiescent vessels, where endothelial cells have tight contacts. In quiescent vessels, ANGPT1 oligomers recruit TEK to cell-cell contacts, forming complexes with TEK molecules from adjoining cells, and this leads to preferential activation of phosphatidylinositol 3-kinase and the AKT1 signaling cascades. In migrating endothelial cells that lack cell-cell adhesions, ANGT1 recruits TEK to contacts with the extracellular matrix, leading to the formation of focal adhesion complexes, activation of PTK2/FAK and of the downstream kinases MAPK1/ERK2 and MAPK3/ERK1, and ultimately to the stimulation of sprouting angiogenesis. ANGPT1 signaling triggers receptor dimerization and autophosphorylation at specific tyrosine residues that then serve as binding sites for scaffold proteins and effectors. Signaling is modulated by ANGPT2 that has lower affinity for TEK, can promote TEK autophosphorylation in the absence of ANGPT1, but inhibits ANGPT1-mediated signaling by competing for the same binding site. Signaling is also modulated by formation of heterodimers with TIE1, and by proteolytic processing that gives rise to a soluble TEK extracellular domain. The soluble extracellular domain modulates signaling by functioning as decoy receptor for angiopoietins. TEK phosphorylates DOK2, GRB7, GRB14, PIK3R1, SHC1 and TIE1. The chain is Angiopoietin-1 receptor (Tek) from Mus musculus (Mouse).